Consider the following 242-residue polypeptide: MATVSMRDMLKAGVHFGHQTRYWNPKMKPFIFGARNRVHIINLEKTVPMFNEALAELAKVGEKKGKVLFVGTKRAASEAVKEAAIASNQYYVNNRWLGGMLTNYKTVRQSIKRLKDFEAQAQDGTFEKLTKKEALMRTREMEKLEKSLGGIKDMGGLPDALFVIDADHEHIAIKEANNLGIPVYAVVDTNSNPDGVDYIIPGNDDAIRAVQLYLNAAASAVTEGRNKDVAVVAEKDGFVEAE.

Belongs to the universal ribosomal protein uS2 family.

The protein is Small ribosomal subunit protein uS2 of Vibrio campbellii (strain ATCC BAA-1116).